Reading from the N-terminus, the 371-residue chain is Chaperone protein DnaJ (371 aa).

The 65-residue stretch at 4 to 68 folds into the J domain; sequence DYYKILGVSK…QKRAAYDRFG (65 aa). The segment at 134–212 adopts a CR-type zinc-finger fold; the sequence is GIEKNISFSS…CHGMGRCHKQ (79 aa). Residues Cys-147, Cys-150, Cys-164, Cys-167, Cys-186, Cys-189, Cys-200, and Cys-203 each contribute to the Zn(2+) site. CXXCXGXG motif repeat units lie at residues 147–154, 164–171, 186–193, and 200–207; these read CDTCHGSG, CDACGGVG, CHKCKGNG, and CKKCHGMG.

The protein belongs to the DnaJ family. As to quaternary structure, homodimer. Requires Zn(2+) as cofactor.

It is found in the cytoplasm. Participates actively in the response to hyperosmotic and heat shock by preventing the aggregation of stress-denatured proteins and by disaggregating proteins, also in an autonomous, DnaK-independent fashion. Unfolded proteins bind initially to DnaJ; upon interaction with the DnaJ-bound protein, DnaK hydrolyzes its bound ATP, resulting in the formation of a stable complex. GrpE releases ADP from DnaK; ATP binding to DnaK triggers the release of the substrate protein, thus completing the reaction cycle. Several rounds of ATP-dependent interactions between DnaJ, DnaK and GrpE are required for fully efficient folding. Also involved, together with DnaK and GrpE, in the DNA replication of plasmids through activation of initiation proteins. This chain is Chaperone protein DnaJ, found in Rickettsia akari (strain Hartford).